Here is a 325-residue protein sequence, read N- to C-terminus: Lactonase drp35 (325 aa).

Ca(2+)-binding residues include Glu-46, Ser-108, Gly-110, Glu-128, Thr-131, Tyr-133, Asp-136, Asn-183, Asp-234, and Ser-235. The Proton donor role is filled by Asp-234.

Belongs to the SMP-30/CGR1 family. It depends on Ca(2+) as a cofactor.

It localises to the cytoplasm. Its function is as follows. Exhibits lactonase activity. Acts in cells with perturbed membrane integrity and is possibly related to the membrane homeostasis. This chain is Lactonase drp35 (drp35), found in Staphylococcus haemolyticus (strain JCSC1435).